A 477-amino-acid polypeptide reads, in one-letter code: Argininosuccinate lyase (477 aa).

A compositionally biased stretch (polar residues) spans 1 to 18 (MTTSSHSSEQPTSTQTSG). A disordered region spans residues 1-21 (MTTSSHSSEQPTSTQTSGMWG).

This sequence belongs to the lyase 1 family. Argininosuccinate lyase subfamily.

The protein resides in the cytoplasm. It carries out the reaction 2-(N(omega)-L-arginino)succinate = fumarate + L-arginine. Its pathway is amino-acid biosynthesis; L-arginine biosynthesis; L-arginine from L-ornithine and carbamoyl phosphate: step 3/3. The protein is Argininosuccinate lyase of Acinetobacter baylyi (strain ATCC 33305 / BD413 / ADP1).